Reading from the N-terminus, the 279-residue chain is Tryptophan synthase alpha chain (279 aa).

Residues glutamate 50 and aspartate 61 each act as proton acceptor in the active site.

The protein belongs to the TrpA family. Tetramer of two alpha and two beta chains.

It carries out the reaction (1S,2R)-1-C-(indol-3-yl)glycerol 3-phosphate + L-serine = D-glyceraldehyde 3-phosphate + L-tryptophan + H2O. The protein operates within amino-acid biosynthesis; L-tryptophan biosynthesis; L-tryptophan from chorismate: step 5/5. Functionally, the alpha subunit is responsible for the aldol cleavage of indoleglycerol phosphate to indole and glyceraldehyde 3-phosphate. The polypeptide is Tryptophan synthase alpha chain (Allorhizobium ampelinum (strain ATCC BAA-846 / DSM 112012 / S4) (Agrobacterium vitis (strain S4))).